The primary structure comprises 479 residues: Proline--tRNA ligase 2 (479 aa).

It belongs to the class-II aminoacyl-tRNA synthetase family. ProS type 3 subfamily. As to quaternary structure, homodimer.

The protein localises to the cytoplasm. It catalyses the reaction tRNA(Pro) + L-proline + ATP = L-prolyl-tRNA(Pro) + AMP + diphosphate. In terms of biological role, catalyzes the attachment of proline to tRNA(Pro) in a two-step reaction: proline is first activated by ATP to form Pro-AMP and then transferred to the acceptor end of tRNA(Pro). The polypeptide is Proline--tRNA ligase 2 (Rhodococcus jostii (strain RHA1)).